Reading from the N-terminus, the 253-residue chain is 5-oxoprolinase subunit A (253 aa).

This sequence belongs to the LamB/PxpA family. Forms a complex composed of PxpA, PxpB and PxpC.

The enzyme catalyses 5-oxo-L-proline + ATP + 2 H2O = L-glutamate + ADP + phosphate + H(+). Functionally, catalyzes the cleavage of 5-oxoproline to form L-glutamate coupled to the hydrolysis of ATP to ADP and inorganic phosphate. The protein is 5-oxoprolinase subunit A of Bacillus anthracis (strain A0248).